The chain runs to 84 residues: UPF0298 protein NWMN_0985 (84 aa).

It belongs to the UPF0298 family.

It localises to the cytoplasm. In Staphylococcus aureus (strain Newman), this protein is UPF0298 protein NWMN_0985.